The primary structure comprises 115 residues: Promotilin (115 aa).

Positions 1–25 are cleaved as a signal peptide; sequence MLSRKATAILLVVHAAAMLASQTEG. A disordered region spans residues 43-73; sequence RYKGQKKSLSVQQRSEEVGPVDPAEPREEKQ.

This sequence belongs to the motilin family.

Its subcellular location is the secreted. Plays an important role in the regulation of interdigestive gastrointestinal motility and indirectly causes rhythmic contraction of duodenal and colonic smooth muscle. In Ovis aries (Sheep), this protein is Promotilin (MLN).